The chain runs to 661 residues: DNA ligase (661 aa).

Residues 31–35, 79–80, and E112 each bind NAD(+); these read DKEYD and SL. K114 serves as the catalytic N6-AMP-lysine intermediate. NAD(+) is bound by residues R135, E169, K281, and K305. Positions 398, 401, 414, and 420 each coordinate Zn(2+). Residues 578-661 enclose the BRCT domain; it reads QQENIFLGKT…ISEAEFEAML (84 aa).

The protein belongs to the NAD-dependent DNA ligase family. LigA subfamily. Mg(2+) serves as cofactor. It depends on Mn(2+) as a cofactor.

It catalyses the reaction NAD(+) + (deoxyribonucleotide)n-3'-hydroxyl + 5'-phospho-(deoxyribonucleotide)m = (deoxyribonucleotide)n+m + AMP + beta-nicotinamide D-nucleotide.. In terms of biological role, DNA ligase that catalyzes the formation of phosphodiester linkages between 5'-phosphoryl and 3'-hydroxyl groups in double-stranded DNA using NAD as a coenzyme and as the energy source for the reaction. It is essential for DNA replication and repair of damaged DNA. The polypeptide is DNA ligase (Alkaliphilus oremlandii (strain OhILAs) (Clostridium oremlandii (strain OhILAs))).